The chain runs to 298 residues: Probable GTP 3',8-cyclase (298 aa).

The Radical SAM core domain maps to 4-221; sequence RYGREIRSFR…VFTRKFMQNR (218 aa). Arg-13 lines the GTP pocket. Positions 20 and 24 each coordinate [4Fe-4S] cluster. Tyr-26 contributes to the S-adenosyl-L-methionine binding site. Cys-27 is a [4Fe-4S] cluster binding site. A GTP-binding site is contributed by Lys-61. Residue Gly-65 coordinates S-adenosyl-L-methionine. Thr-91 contacts GTP. Residue Ser-115 participates in S-adenosyl-L-methionine binding. GTP is bound at residue Lys-152. 2 residues coordinate [4Fe-4S] cluster: Cys-243 and Cys-246. 248-250 lines the GTP pocket; that stretch reads RIR. Residue Cys-260 coordinates [4Fe-4S] cluster.

The protein belongs to the radical SAM superfamily. MoaA family. It depends on [4Fe-4S] cluster as a cofactor.

The catalysed reaction is GTP + AH2 + S-adenosyl-L-methionine = (8S)-3',8-cyclo-7,8-dihydroguanosine 5'-triphosphate + 5'-deoxyadenosine + L-methionine + A + H(+). Its pathway is cofactor biosynthesis; molybdopterin biosynthesis. Its function is as follows. Catalyzes the cyclization of GTP to (8S)-3',8-cyclo-7,8-dihydroguanosine 5'-triphosphate. In Methanococcus maripaludis (strain C7 / ATCC BAA-1331), this protein is Probable GTP 3',8-cyclase.